The chain runs to 146 residues: Hemoglobin subunit beta (146 aa).

An N-acetylvaline modification is found at V1. Residues 2–146 enclose the Globin domain; the sequence is HMTDAEKKLV…VANALAHKYH (145 aa). The residue at position 12 (T12) is a Phosphothreonine. K59 carries the N6-acetyllysine modification. H63 serves as a coordination point for heme b. Residue K82 is modified to N6-acetyllysine. Position 92 (H92) interacts with heme b. C93 bears the S-nitrosocysteine mark. The residue at position 144 (K144) is an N6-acetyllysine.

The protein belongs to the globin family. In terms of assembly, tetramer of two alpha and two different beta chains. Two external cysteine residues at beta-16 and beta-52 cause reversible polymerization to octamers and most likely irreversible formation of higher polymers. As to expression, red blood cells.

Involved in oxygen transport from the lung to the various peripheral tissues. In Echinops telfairi (Lesser hedgehog tenrec), this protein is Hemoglobin subunit beta (HBB).